A 457-amino-acid polypeptide reads, in one-letter code: Methylenetetrahydrofolate--tRNA-(uracil-5-)-methyltransferase TrmFO (457 aa).

G8 to G13 is a binding site for FAD.

The protein belongs to the MnmG family. TrmFO subfamily. FAD serves as cofactor.

It is found in the cytoplasm. It catalyses the reaction uridine(54) in tRNA + (6R)-5,10-methylene-5,6,7,8-tetrahydrofolate + NADH + H(+) = 5-methyluridine(54) in tRNA + (6S)-5,6,7,8-tetrahydrofolate + NAD(+). The catalysed reaction is uridine(54) in tRNA + (6R)-5,10-methylene-5,6,7,8-tetrahydrofolate + NADPH + H(+) = 5-methyluridine(54) in tRNA + (6S)-5,6,7,8-tetrahydrofolate + NADP(+). Catalyzes the folate-dependent formation of 5-methyl-uridine at position 54 (M-5-U54) in all tRNAs. The sequence is that of Methylenetetrahydrofolate--tRNA-(uracil-5-)-methyltransferase TrmFO from Thermosynechococcus vestitus (strain NIES-2133 / IAM M-273 / BP-1).